A 249-amino-acid chain; its full sequence is ATP-dependent Clp protease proteolytic subunit (249 aa).

Serine 107 functions as the Nucleophile in the catalytic mechanism. Histidine 132 is a catalytic residue. Residues glutamate 212–arginine 249 are disordered.

It belongs to the peptidase S14 family. Component of the chloroplastic Clp protease core complex.

It is found in the plastid. The protein localises to the chloroplast stroma. The enzyme catalyses Hydrolysis of proteins to small peptides in the presence of ATP and magnesium. alpha-casein is the usual test substrate. In the absence of ATP, only oligopeptides shorter than five residues are hydrolyzed (such as succinyl-Leu-Tyr-|-NHMec, and Leu-Tyr-Leu-|-Tyr-Trp, in which cleavage of the -Tyr-|-Leu- and -Tyr-|-Trp bonds also occurs).. Its function is as follows. Cleaves peptides in various proteins in a process that requires ATP hydrolysis. Has a chymotrypsin-like activity. Plays a major role in the degradation of misfolded proteins. This Oenothera elata subsp. hookeri (Hooker's evening primrose) protein is ATP-dependent Clp protease proteolytic subunit.